We begin with the raw amino-acid sequence, 186 residues long: UPF0200 protein PF1294 (186 aa).

7–14 (GMPGSGKG) contacts ATP.

This sequence belongs to the UPF0200 family.

The polypeptide is UPF0200 protein PF1294 (Pyrococcus furiosus (strain ATCC 43587 / DSM 3638 / JCM 8422 / Vc1)).